A 704-amino-acid polypeptide reads, in one-letter code: Fibulin-1 (704 aa).

The first 25 residues, 1–25 (MDKLRGARPLRLLLLLLALLPALRG), serve as a signal peptide directing secretion. 35 disulfides stabilise this stretch: Cys33–Cys59, Cys34–Cys66, Cys47–Cys67, Cys76–Cys107, Cys89–Cys108, Cys110–Cys134, Cys111–Cys141, Cys124–Cys142, Cys181–Cys191, Cys187–Cys200, Cys202–Cys215, Cys221–Cys234, Cys228–Cys243, Cys249–Cys261, Cys267–Cys280, Cys274–Cys289, Cys295–Cys307, Cys313–Cys326, Cys320–Cys335, Cys342–Cys355, Cys361–Cys374, Cys368–Cys383, Cys385–Cys398, Cys404–Cys416, Cys412–Cys425, Cys427–Cys440, Cys446–Cys455, Cys451–Cys464, Cys466–Cys480, Cys486–Cys499, Cys495–Cys508, Cys510–Cys524, Cys530–Cys543, Cys537–Cys552, and Cys557–Cys578. 3 consecutive Anaphylatoxin-like domains span residues 33–74 (CCDK…LEEH), 75–109 (YCSD…KCCY), and 110–142 (CCLL…RACC). Asn96 is a glycosylation site (N-linked (GlcNAc...) asparagine). Residues 177–216 (LHDGCRGGGPCSQQCRDTGSSYVCSCFVGYQLQPDGVNCE) enclose the EGF-like 1 domain. The 46-residue stretch at 217 to 262 (DINECITGTHSCGIGQTCVNTLGSFRCQRDTSCGTGYELTDDSRCK) folds into the EGF-like 2; calcium-binding domain. One can recognise an EGF-like 3; calcium-binding domain in the interval 263–308 (DIDECETGTHNCPPDFICQNTPGSFRCRPKLQCMNGFIQDALGNCI). The EGF-like 4; calcium-binding domain occupies 309-356 (DINECLSTNMPCPAGQICINTDGSYTCQRISPSCGRGYHLNEDGTRCV). Positions 357–399 (DVDECSSSDQPCGEGHVCINGPGNYRCECKSGYSFDVISRTCI) constitute an EGF-like 5; calcium-binding domain. Positions 357–441 (DVDECSSSDQ…KLSSDGRSCE (85 aa)) are self-association and FN1-binding. Residues 400 to 441 (DINECRRYPGRLCAHKCENTPGSYYCTCTMGFKLSSDGRSCE) form the EGF-like 6; calcium-binding domain. In terms of domain architecture, EGF-like 7; calcium-binding spans 442–481 (DLNECESSPCSQECANVYGSYQCYCRRGFQLSDIDGISCE). The EGF-like 8; calcium-binding domain maps to 482 to 525 (DIDECALPTGGHICSFRCINIPGSFQCTCPSTGYRLAPNARNCQ). One can recognise an EGF-like 9; calcium-binding domain in the interval 526 to 579 (DIDECVAETHNCSFNETCFNIQGGFRCLSLECPENYRKSGDTVRLEKTDTIRCI). 2 N-linked (GlcNAc...) asparagine glycosylation sites follow: Asn536 and Asn540.

It belongs to the fibulin family. In terms of assembly, homomultimerizes and interacts with various extracellular matrix components.

It localises to the secreted. The protein resides in the extracellular space. It is found in the extracellular matrix. Incorporated into fibronectin-containing matrix fibers. May play a role in cell adhesion and migration along protein fibers within the extracellular matrix (ECM). Could be important for certain developmental processes and contribute to the supramolecular organization of ECM architecture, in particular to those of basement membranes. The sequence is that of Fibulin-1 (FBLN1) from Gallus gallus (Chicken).